Here is a 31-residue protein sequence, read N- to C-terminus: Cuticle protein 54 (31 aa).

Tandem repeats lie at residues 7 to 10 (AAPA) and 13 to 17 (AAPAI).

Functionally, component of the cuticle of migratory locust which contains more than 100 different structural proteins. The chain is Cuticle protein 54 from Locusta migratoria (Migratory locust).